The sequence spans 146 residues: Large ribosomal subunit protein uL15 (146 aa).

The disordered stretch occupies residues 1 to 61 (MELNSLKPAA…GGQMPMHRRL (61 aa)). The segment covering 30–39 (TATKGHKGQK) has biased composition (basic residues).

This sequence belongs to the universal ribosomal protein uL15 family. As to quaternary structure, part of the 50S ribosomal subunit.

Functionally, binds to the 23S rRNA. The chain is Large ribosomal subunit protein uL15 from Geotalea uraniireducens (strain Rf4) (Geobacter uraniireducens).